We begin with the raw amino-acid sequence, 283 residues long: Small ribosomal subunit protein uS2B (283 aa).

Residues 254–283 (GQVGQSAWDEEGDWNTTGAAQTSDWANTVA) are disordered. The segment covering 267–283 (WNTTGAAQTSDWANTVA) has biased composition (polar residues).

The protein belongs to the universal ribosomal protein uS2 family. Component of the small ribosomal subunit. Mature ribosomes consist of a small (40S) and a large (60S) subunit. The 40S subunit contains about 33 different proteins and 1 molecule of RNA (18S). The 60S subunit contains about 49 different proteins and 3 molecules of RNA (25S, 5.8S and 5S). Interacts with rps21.

It localises to the cytoplasm. Functionally, required for the assembly and/or stability of the 40S ribosomal subunit. Required for the processing of the 20S rRNA-precursor to mature 18S rRNA in a late step of the maturation of 40S ribosomal subunits. The sequence is that of Small ribosomal subunit protein uS2B (rps0b) from Schizosaccharomyces japonicus (strain yFS275 / FY16936) (Fission yeast).